Consider the following 788-residue polypeptide: Endonuclease MutS2 (788 aa).

Gly334–Thr341 is a binding site for ATP. One can recognise a Smr domain in the interval Leu713–Gln788.

This sequence belongs to the DNA mismatch repair MutS family. MutS2 subfamily. Homodimer. Binds to stalled ribosomes, contacting rRNA.

In terms of biological role, endonuclease that is involved in the suppression of homologous recombination and thus may have a key role in the control of bacterial genetic diversity. Functionally, acts as a ribosome collision sensor, splitting the ribosome into its 2 subunits. Detects stalled/collided 70S ribosomes which it binds and splits by an ATP-hydrolysis driven conformational change. Acts upstream of the ribosome quality control system (RQC), a ribosome-associated complex that mediates the extraction of incompletely synthesized nascent chains from stalled ribosomes and their subsequent degradation. Probably generates substrates for RQC. This Enterococcus faecalis (strain ATCC 700802 / V583) protein is Endonuclease MutS2.